A 91-amino-acid polypeptide reads, in one-letter code: MGRSLKKGPFIADSLLRKVEKQNDNDDKSVIKTWSRASTILPMMIGHTIAVHNGRTHVPVFITEQMVGHKLGEFAPTRTFKGHIRDKKGGR.

The protein belongs to the universal ribosomal protein uS19 family.

Functionally, protein S19 forms a complex with S13 that binds strongly to the 16S ribosomal RNA. The protein is Small ribosomal subunit protein uS19 of Synechococcus sp. (strain CC9605).